Here is a 1228-residue protein sequence, read N- to C-terminus: MHTRMQIRNRVNFGKITDLNLLPNLIYVQKKSFDWFLQSEVKDPTKRLNQGLEAVFRESFPIESPNNDMVMEYGHYVLGEPKRDPQECKDTDSSFAVPLKAVIRLIIKDTGEIREQVVYMGDLPVMTDHGTFIINGAERVVVSQLHRSPGIFFSYDQVRDTFSARVIPYRGSWLEFEMDNKGILVAKIDRKKNFPATLLVKAMGMGTNEEVLRLFYGSSKMKIAGANPKDLKRLIGRRTIADIINMETGEVMLDAGSKINEDNISILREMKVKEVDVIEFPKGKDNPVLINCLEKDGVNDYEDAVKKFHTIMRPGEPSTIENAEAELKRLFFSPKTFDLGIVGRYKINSKFEFNNPKEFSKADDRVLRKQDIIETVRYLVMLMSEAENYYPDDIDHLGNRRIRSVGELIANQLKLGFSRVERVIKERMTVQEPEQQTPQLLISIKPITAVINEFFGSSQLSQFMDQTNPLAELTHKRRLNALGPGGLSRDRAGFEVRDVHYSHYGRMCPIETPEGPNIGLILSMSSFARVNDYGFIETPYRLVKNGKVQKQVEYLTADKEEYHYMAQSNSTVDEKGEFTSKLISTRHRGDFPFRSPAEIQYMDLAPLQVVSVSTALIPFLEHDDANRALMGSNMQRQAVPLLTEEAPFVGTGMEARAAYDAGVCIVAKKDGVVSKVDATGVWIKEDQSKEIVHYPLIKFKKTNQGTCFNQKPNVSMLHTTTGGKVSKVSKERVEVTTPNGEKETHELLLSDEVQFHAVVKEGQEVGIGAPVAGQIIKGEKYGDFGQILQKGTVLANGPSTDAGYLALGRNVLVAFMPWEGYNFEDAILISERIIKDDVFSSIHIEEFEIQARETKLGQEQITRDIPNLSDKAFRDLDESGVIRVGAEVKPGDILVGMVTPKGETDLTPEYKLLHSIFGEKAKEVRDSSLRMPNGFEGTVIDIKRYSRETGDELAAGVEEMVKVYVARKRKLLVGDKMAGRHGNKGVVARVMAQEDMPYMEDGSPVDIVLNPLGVPSRMNLGQIFETQLGFAAKKLGINFETPVFDGASEGDVNDFCKKAGLPENSKFQLYDGRTGEKFINQVFCGYIYMLKLAHLVDDKIHARSTGPYSLVTQQPLGGKAQFGGQRLGEMEVWALEAYGASHTLQELLTIKSDDMLGRARIYEAIVKGIHSIKPGIPESFNVLVQELRGLALDIIIKDSEGLEVDISDYEDEFSKNKKKIKFETIENV.

The protein belongs to the RNA polymerase beta chain family. As to quaternary structure, the RNAP catalytic core consists of 2 alpha, 1 beta, 1 beta' and 1 omega subunit. When a sigma factor is associated with the core the holoenzyme is formed, which can initiate transcription.

The catalysed reaction is RNA(n) + a ribonucleoside 5'-triphosphate = RNA(n+1) + diphosphate. Functionally, DNA-dependent RNA polymerase catalyzes the transcription of DNA into RNA using the four ribonucleoside triphosphates as substrates. This chain is DNA-directed RNA polymerase subunit beta, found in Leptospira biflexa serovar Patoc (strain Patoc 1 / Ames).